Consider the following 1107-residue polypeptide: RNA-dependent RNA polymerase 1 (1107 aa).

This sequence belongs to the RdRP family.

The catalysed reaction is RNA(n) + a ribonucleoside 5'-triphosphate = RNA(n+1) + diphosphate. RNA-dependent direct polymerase involved in antiviral silencing. Required for the production of some small RNAs (mainly 21 and some 22 nucleotides) derived from the crucifer-infecting tobamovirus (TMV-cg). Required for turnip mosaic virus (TuMV) silencing and accumulation of viral siRNAs. Involved in cucumber mosaic virus (CMV) silencing. Required for the biogenesis of viral secondary siRNAs, process that follows the production of primary siRNAs derived from viral RNA replication. Specifically targets the positive-strand of the 3 RNA genomes of CMV and preferentially amplifies the 5'-terminal siRNAs of each viral genomic RNA. Not involved in the production of siRNAs derived from a single-stranded 336-nucleotide satellite RNA of CMV. The chain is RNA-dependent RNA polymerase 1 (RDR1) from Arabidopsis thaliana (Mouse-ear cress).